We begin with the raw amino-acid sequence, 252 residues long: Small ribosomal subunit protein uS2B (252 aa).

Position 2 is an N-acetylserine (Ser-2). Acidic residues-rich tracts occupy residues 213-229 (VAEEAAAAEEGEEEEVK) and 241-252 (EWAEENADNVEW). The tract at residues 213-252 (VAEEAAAAEEGEEEEVKEEVTEGQAEATEWAEENADNVEW) is disordered.

It belongs to the universal ribosomal protein uS2 family. Component of the small ribosomal subunit. Mature ribosomes consist of a small (40S) and a large (60S) subunit. The 40S subunit contains about 33 different proteins and 1 molecule of RNA (18S). The 60S subunit contains about 49 different proteins and 3 molecules of RNA (25S, 5.8S and 5S). Interacts with RPS21.

The protein localises to the cytoplasm. Its function is as follows. Required for the assembly and/or stability of the 40S ribosomal subunit. Required for the processing of the 20S rRNA-precursor to mature 18S rRNA in a late step of the maturation of 40S ribosomal subunits. The protein is Small ribosomal subunit protein uS2B of Saccharomyces cerevisiae (strain RM11-1a) (Baker's yeast).